Here is a 137-residue protein sequence, read N- to C-terminus: Probable leaf thionin (137 aa).

An N-terminal signal peptide occupies residues 1–28 (MATNKSIKSVVICVLILGLVLEQVQVEG). 4 cysteine pairs are disulfide-bonded: Cys31/Cys68, Cys32/Cys60, Cys40/Cys58, and Cys44/Cys54. A propeptide spans 75–137 (LNLLPESGEP…DGDVIQSVEA (63 aa)) (acidic domain).

This sequence belongs to the plant thionin (TC 1.C.44) family. 4 C-C subfamily.

Its subcellular location is the secreted. In terms of biological role, thionins are small plant proteins which are toxic to animal cells. They seem to exert their toxic effect at the level of the cell membrane. Their precise function is not known. This is Probable leaf thionin from Hordeum vulgare (Barley).